The sequence spans 291 residues: Mitochondrial fission factor (291 aa).

Over 1 to 271 (MAEISRIQYE…ENKERAKREM (271 aa)) the chain is Cytoplasmic. Thr89 is modified (phosphothreonine). Residues 106 to 134 (LERPLPTPQSEESRAVGRLKRERSMSENA) form a disordered region. Residues Ser129, Ser131, and Ser146 each carry the phosphoserine modification. Thr149 bears the Phosphothreonine mark. Residues Ser151, Ser178, Ser182, and Ser244 each carry the phosphoserine modification. The stretch at 240–271 (VDAASLRRQIIKLNRRLQLLEEENKERAKREM) forms a coiled coil. Residues 272–289 (VMYSITVAFWLLNSWLWF) traverse the membrane as a helical; Anchor for type IV membrane protein segment. The Mitochondrial intermembrane portion of the chain corresponds to 290-291 (RR).

Belongs to the Tango11 family. Homodimer. Interacts with DNM1L. Interacts with C11orf65/MFI; the interaction inhibits MFF interaction with DNM1L.

The protein resides in the mitochondrion outer membrane. The protein localises to the peroxisome. Its subcellular location is the cytoplasmic vesicle. It is found in the secretory vesicle. It localises to the synaptic vesicle. Its function is as follows. Plays a role in mitochondrial and peroxisomal fission. Promotes the recruitment and association of the fission mediator dynamin-related protein 1 (DNM1L) to the mitochondrial surface. May be involved in regulation of synaptic vesicle membrane dynamics by recruitment of DNM1L to clathrin-containing vesicles. This is Mitochondrial fission factor (Mff) from Mus musculus (Mouse).